Here is a 318-residue protein sequence, read N- to C-terminus: Biotin synthase (318 aa).

Positions 44–273 (LCGKKFNLCT…EKQIRLAGGR (230 aa)) constitute a Radical SAM core domain. Residues C62, C66, and C69 each coordinate [4Fe-4S] cluster. 4 residues coordinate [2Fe-2S] cluster: S106, C138, C198, and R268.

Belongs to the radical SAM superfamily. Biotin synthase family. As to quaternary structure, homodimer. The cofactor is [4Fe-4S] cluster. [2Fe-2S] cluster serves as cofactor.

It carries out the reaction (4R,5S)-dethiobiotin + (sulfur carrier)-SH + 2 reduced [2Fe-2S]-[ferredoxin] + 2 S-adenosyl-L-methionine = (sulfur carrier)-H + biotin + 2 5'-deoxyadenosine + 2 L-methionine + 2 oxidized [2Fe-2S]-[ferredoxin]. Its pathway is cofactor biosynthesis; biotin biosynthesis; biotin from 7,8-diaminononanoate: step 2/2. Functionally, catalyzes the conversion of dethiobiotin (DTB) to biotin by the insertion of a sulfur atom into dethiobiotin via a radical-based mechanism. This Clostridium botulinum (strain Alaska E43 / Type E3) protein is Biotin synthase.